Here is a 391-residue protein sequence, read N- to C-terminus: Elongation factor Tu (391 aa).

Residues 10–201 (KPHVNIGTIG…AVDAYIPTPE (192 aa)) enclose the tr-type G domain. The tract at residues 19 to 26 (GHVDHGKT) is G1. Residue 19–26 (GHVDHGKT) coordinates GTP. Thr-26 is a Mg(2+) binding site. Positions 55–59 (GITIS) are G2. Residues 76-79 (DCPG) are G3. GTP is bound by residues 76–80 (DCPGH) and 131–134 (NKVD). Residues 131–134 (NKVD) are G4. Positions 169-171 (SAL) are G5.

It belongs to the TRAFAC class translation factor GTPase superfamily. Classic translation factor GTPase family. EF-Tu/EF-1A subfamily. In terms of assembly, monomer.

It localises to the cytoplasm. The enzyme catalyses GTP + H2O = GDP + phosphate + H(+). In terms of biological role, GTP hydrolase that promotes the GTP-dependent binding of aminoacyl-tRNA to the A-site of ribosomes during protein biosynthesis. This Rhizobium johnstonii (strain DSM 114642 / LMG 32736 / 3841) (Rhizobium leguminosarum bv. viciae) protein is Elongation factor Tu.